The sequence spans 200 residues: MIGLFLAAPLVLSSAVWANPQQELSSRLSLVNAFSANFDQKVVSPEGDVLVEGKGDVTIKRPNLFRWNTVTPDENLLVSDGKTLWYYSPFIEQVTAMWLKDATEQTPFVLLTRNSASDWDNYNVAQTSDTFTLTPKDTTSTMGKFVVTVAKTGEVRNFSVVEQDGQRSNFKFRQFSKQVPKANIFTFTPPKGVELDDQRN.

An N-terminal signal peptide occupies residues 1-18; the sequence is MIGLFLAAPLVLSSAVWA.

This sequence belongs to the LolA family. As to quaternary structure, monomer.

It localises to the periplasm. Its function is as follows. Participates in the translocation of lipoproteins from the inner membrane to the outer membrane. Only forms a complex with a lipoprotein if the residue after the N-terminal Cys is not an aspartate (The Asp acts as a targeting signal to indicate that the lipoprotein should stay in the inner membrane). The polypeptide is Outer-membrane lipoprotein carrier protein (Photobacterium profundum (strain SS9)).